Consider the following 349-residue polypeptide: MQGLRTLFLLLTACLASRADPASTLPDIQVQENFSESRIYGKWYNLAVGSTCPWLSRIKDKMSVSTLVLQEGATETEISMTSTRWRRGVCEEITGAYQKTDIDGKFLYHKSKWNITLESYVVHTNYDEYAIFLTKKSSHHHGLTITAKLYGREPQLRDSLLQEFKDVALNVGISENSIIFMPDRGECVPGDREVEPTSIARARRAVLPQESEGSGTEPLITGTLKKEDSCQLNYSEGPCLGMQERYYYNGASMACETFQYGGCLGNGNNFISEKDCLQTCRTIAACNLPIVQGPCRAFIKLWAFDAAQGKCIQFHYGGCKGNGNKFYSEKECKEYCGVPGDGYEELIRS.

A signal peptide spans 1–19 (MQGLRTLFLLLTACLASRA). Asparagine 33 carries N-linked (GlcNAc...) asparagine glycosylation. 3-hydroxy-L-kynurenine contacts are provided by cysteine 52 and lysine 110. A disulfide bridge links cysteine 90 with cysteine 187. Asparagine 114 carries N-linked (GlcNAc...) asparagine glycosylation. 3-hydroxy-L-kynurenine is bound by residues lysine 136 and lysine 148. The O-linked (Xyl...) (chondroitin sulfate) serine glycan is linked to serine 214. Cystine bridges form between cysteine 230/cysteine 280, cysteine 239/cysteine 263, cysteine 255/cysteine 276, cysteine 286/cysteine 336, cysteine 295/cysteine 319, and cysteine 311/cysteine 332. 2 BPTI/Kunitz inhibitor domains span residues 230 to 280 (CQLN…LQTC) and 286 to 336 (CNLP…KEYC). An N-linked (GlcNAc...) asparagine glycan is attached at asparagine 233.

The protein in the N-terminal section; belongs to the calycin superfamily. Lipocalin family. Monomer. Homodimer. In plasma, it occurs as a monomer or dimer and in covalently-linked complexes with immunoglobulin A (IgA), ALB/albumin and F2/prothrombin. Chromophore-bound alpha-1-microglobulin interacts with the constant region of immunoglobulin A. Chromophore-bound alpha-1-microglobulin interacts with ALB with molar ratio 2:1 and 1:1; this interaction does not prevent fatty acid binding to ALB. Interacts with F2/prothrombin (via N-terminus) with molar ratio 2:1 and 1:1; this interaction does not prevent the activation of prothrombin to thrombin. Interacts with NDUFAB1, a subunit of mitochondrial complex I. Interacts with FN1. As to quaternary structure, I-alpha-I plasma protease inhibitors are assembled from one or two heavy chains (HC) and one light chain, bikunin. Inter-alpha-inhibitor (I-alpha-I) is composed of ITIH1/HC1, ITIH2/HC2 and bikunin, and pre-alpha-inhibitor (P-alpha-I) of ITIH3/HC3 and bikunin. Interacts with TNFAIP6 (via Link domain). In terms of assembly, monomer. Also occurs as a complex with tryptase in mast cells. The precursor is proteolytically processed into separately functioning proteins. Post-translationally, 3-hydroxykynurenine, an oxidized tryptophan metabolite that is common in biological fluids, reacts with Cys-53, Lys-111, Lys-137, and Lys-149 to form heterogeneous polycyclic chromophores including hydroxanthommatin. The reaction by alpha-1-microglobulin is autocatalytic; the human protein forms chromophore even when expressed in insect and bacterial cells. The chromophore can react with accessible cysteines forming non-reducible thioether cross-links with other molecules of alpha-1-microglobulin or with other proteins such as Ig alpha-1 chain C region 'Cys-352'. In terms of processing, heavy chains are interlinked with bikunin via a chondroitin 4-sulfate bridge to the C-terminal aspartate. Proteolytically cleaved by PRSS3 at Kunitz domain 2. As to expression, expressed by the liver and secreted in plasma (at protein level).

It is found in the secreted. The protein localises to the endoplasmic reticulum. It localises to the cytoplasm. Its subcellular location is the cytosol. The protein resides in the cell membrane. It is found in the nucleus membrane. The protein localises to the mitochondrion inner membrane. It localises to the extracellular space. Its subcellular location is the extracellular matrix. In terms of biological role, antioxidant and tissue repair protein with reductase, heme-binding and radical-scavenging activities. Removes and protects against harmful oxidants and repairs macromolecules in intravascular and extravascular spaces and in intracellular compartments. Intravascularly, plays a regulatory role in red cell homeostasis by preventing heme- and reactive oxygen species-induced cell damage. Binds and degrades free heme to protect fetal and adult red blood cells from hemolysis. Reduces extracellular methemoglobin, a Fe3+ (ferric) form of hemoglobin that cannot bind oxygen, back to the Fe2+ (ferrous) form deoxyhemoglobin, which has oxygen-carrying potential. Upon acute inflammation, inhibits oxidation of low-density lipoprotein particles by MPO and limits vascular damage. Extravascularly, protects from oxidation products formed on extracellular matrix structures and cell membranes. Catalyzes the reduction of carbonyl groups on oxidized collagen fibers and preserves cellular and extracellular matrix ultrastructures. Importantly, counteracts the oxidative damage at blood-placenta interface, preventing leakage of free fetal hemoglobin into the maternal circulation. Intracellularly, has a role in maintaining mitochondrial redox homeostasis. Bound to complex I of the respiratory chain of mitochondria, may scavenge free radicals and preserve mitochondrial ATP synthesis. Protects renal tubule epithelial cells from heme-induced oxidative damage to mitochondria. Reduces cytochrome c from Fe3+ (ferric) to the Fe2+ (ferrous) state through formation of superoxide anion radicals in the presence of ascorbate or NADH/NADPH electron donor cofactors, ascorbate being the preferred cofactor. Has a chaperone role in facilitating the correct folding of bikunin in the endoplasmic reticulum compartment. Kunitz-type serine protease inhibitor and structural component of extracellular matrix with a role in extracellular space remodeling and cell adhesion. Among others, has antiprotease activity toward kallikrein, a protease involved in airway inflammation; inhibits GZMK/granzyme, a granule-stored serine protease involved in NK and T cell cytotoxic responses; and inhibits PLG/plasmin, a protease required for activation of matrix metalloproteinases. As part of I-alpha-I complex, provides for the heavy chains to be transferred from I-alpha-I complex to hyaluronan in the presence of TNFAIP6, in a dynamic process that releases free bikunin and remodels extracellular matrix proteoglycan structures. Free bikunin, but not its heavy chain-bound form, acts as a potent protease inhibitor in airway secretions. Part of hyaluronan-rich extracellular matrix that surrounds oocyte during cumulus oophorus expansion, an indispensable process for proper ovulation. Also inhibits calcium oxalate crystallization. Its function is as follows. Kunitz-type serine protease inhibitor. Has high catalytic efficiency for F10/blood coagulation factor Xa and may act as an anticoagulant by inhibiting prothrombin activation. Inhibits trypsin and mast cell CMA1/chymase and tryptase proteases. The chain is Protein AMBP (Ambp) from Mus musculus (Mouse).